Reading from the N-terminus, the 262-residue chain is Nickel import ATP-binding protein NikD (262 aa).

Residues 6 to 249 (LAIEGLTATT…PGHEVTRMLV (244 aa)) form the ABC transporter domain. 42–49 (GASGSGKS) contributes to the ATP binding site.

The protein belongs to the ABC transporter superfamily. Nickel importer (TC 3.A.1.5.3) family. As to quaternary structure, the complex is composed of two ATP-binding proteins (NikD and NikE), two transmembrane proteins (NikB and NikC) and a solute-binding protein (NikA).

It is found in the cell inner membrane. The catalysed reaction is Ni(2+)(out) + ATP + H2O = Ni(2+)(in) + ADP + phosphate + H(+). Its function is as follows. Part of the ABC transporter complex NikABCDE involved in nickel import. Responsible for energy coupling to the transport system. The polypeptide is Nickel import ATP-binding protein NikD (Brucella abortus biovar 1 (strain 9-941)).